The chain runs to 294 residues: Acetylglutamate kinase (294 aa).

Substrate-binding positions include 63–64, arginine 85, and asparagine 188; that span reads GG.

This sequence belongs to the acetylglutamate kinase family. ArgB subfamily.

It is found in the cytoplasm. The catalysed reaction is N-acetyl-L-glutamate + ATP = N-acetyl-L-glutamyl 5-phosphate + ADP. It participates in amino-acid biosynthesis; L-arginine biosynthesis; N(2)-acetyl-L-ornithine from L-glutamate: step 2/4. Functionally, catalyzes the ATP-dependent phosphorylation of N-acetyl-L-glutamate. The polypeptide is Acetylglutamate kinase (Methanococcus maripaludis (strain C5 / ATCC BAA-1333)).